A 439-amino-acid chain; its full sequence is Taxadien-5-alpha-ol O-acetyltransferase (439 aa).

Active-site proton acceptor residues include H164 and D373.

This sequence belongs to the plant acyltransferase family.

It catalyses the reaction taxa-4(20),11-dien-5alpha-ol + acetyl-CoA = taxa-4(20),11-dien-5alpha-yl acetate + CoA. Its pathway is alkaloid biosynthesis; taxol biosynthesis; 10-deacetyl-2-debenzoylbaccatin III from taxa-4(20),11-dien-5alpha-ol: step 1/3. This chain is Taxadien-5-alpha-ol O-acetyltransferase, found in Taxus chinensis (Chinese yew).